The chain runs to 457 residues: Carboxypeptidase N catalytic chain (457 aa).

The signal sequence occupies residues 1–23 (MPDLPSAFLPLLLLSKFVTPVTF). Residues 24–338 (RHHRYDDLVR…EALIQFLEQV (315 aa)) enclose the Peptidase M14 domain. An intrachain disulfide couples C42 to C104. Positions 86, 89, and 216 each coordinate Zn(2+). The cysteines at positions 271 and 311 are disulfide-linked. The active-site Proton donor/acceptor is E308. T400, T402, and T409 each carry an O-linked (GalNAc...) threonine glycan. Positions 418–457 (SSSQVYPVQRAPGRGQGGRAKQPRTSRKKDPATKRHRGPA) are disordered.

Belongs to the peptidase M14 family. Tetramer of two catalytic chains and two glycosylated inactive chains. It depends on Zn(2+) as a cofactor. As to expression, mainly expressed in liver. Also detected in lung, stomach, intestine, spleen and kidney.

The protein localises to the secreted. It is found in the extracellular space. The enzyme catalyses Release of a C-terminal basic amino acid, preferentially lysine.. Protects the body from potent vasoactive and inflammatory peptides containing C-terminal Arg or Lys (such as kinins or anaphylatoxins) which are released into the circulation. The polypeptide is Carboxypeptidase N catalytic chain (Cpn1) (Mus musculus (Mouse)).